The sequence spans 102 residues: Small ribosomal subunit protein uS10 (102 aa).

It belongs to the universal ribosomal protein uS10 family. Part of the 30S ribosomal subunit.

In terms of biological role, involved in the binding of tRNA to the ribosomes. In Allorhizobium ampelinum (strain ATCC BAA-846 / DSM 112012 / S4) (Agrobacterium vitis (strain S4)), this protein is Small ribosomal subunit protein uS10.